A 233-amino-acid chain; its full sequence is Small ribosomal subunit protein uS2 (233 aa).

The protein belongs to the universal ribosomal protein uS2 family.

This Clostridium botulinum (strain Eklund 17B / Type B) protein is Small ribosomal subunit protein uS2.